Reading from the N-terminus, the 141-residue chain is Large ribosomal subunit protein uL11 (141 aa).

It belongs to the universal ribosomal protein uL11 family. As to quaternary structure, part of the ribosomal stalk of the 50S ribosomal subunit. Interacts with L10 and the large rRNA to form the base of the stalk. L10 forms an elongated spine to which L12 dimers bind in a sequential fashion forming a multimeric L10(L12)X complex. Post-translationally, one or more lysine residues are methylated.

In terms of biological role, forms part of the ribosomal stalk which helps the ribosome interact with GTP-bound translation factors. The protein is Large ribosomal subunit protein uL11 of Chlorobaculum parvum (strain DSM 263 / NCIMB 8327) (Chlorobium vibrioforme subsp. thiosulfatophilum).